We begin with the raw amino-acid sequence, 103 residues long: Defensin-like protein 268 (103 aa).

The signal sequence occupies residues 1–24 (MARLIFHFVFALILAAYLLSVTDA). 4 disulfides stabilise this stretch: Cys44-Cys103, Cys68-Cys87, Cys74-Cys98, and Cys78-Cys100.

This sequence belongs to the DEFL family.

The protein resides in the secreted. This Arabidopsis thaliana (Mouse-ear cress) protein is Defensin-like protein 268.